A 914-amino-acid polypeptide reads, in one-letter code: Probable dipeptidyl-aminopeptidase B (914 aa).

Residues 1–82 (MGAEKRINDE…GLPPPSGAQR (82 aa)) form a disordered region. Residues 1 to 88 (MGAEKRINDE…GAQRTPKKVS (88 aa)) lie on the Cytoplasmic side of the membrane. Low complexity predominate over residues 26–38 (DSTSTASISLALI). A helical; Signal-anchor for type II membrane protein transmembrane segment spans residues 89–109 (IIFWLVAALCVGGWLVAFFVF). The Vacuolar portion of the chain corresponds to 110–914 (MGSPKKDSDK…RSLLKRMSNA (805 aa)). N128, N295, N347, and N617 each carry an N-linked (GlcNAc...) asparagine glycan. Catalysis depends on S751, which acts as the Charge relay system. N810 carries N-linked (GlcNAc...) asparagine glycosylation. Catalysis depends on charge relay system residues D828 and H861. N-linked (GlcNAc...) asparagine glycosylation is present at N897.

The protein belongs to the peptidase S9B family.

The protein localises to the vacuole membrane. The catalysed reaction is Release of an N-terminal dipeptide, Xaa-Yaa-|-Zaa-, from a polypeptide, preferentially when Yaa is Pro, provided Zaa is neither Pro nor hydroxyproline.. In terms of biological role, type IV dipeptidyl-peptidase which removes N-terminal dipeptides sequentially from polypeptides having unsubstituted N-termini provided that the penultimate residue is proline. The polypeptide is Probable dipeptidyl-aminopeptidase B (DAPB) (Uncinocarpus reesii (strain UAMH 1704)).